Reading from the N-terminus, the 635-residue chain is 1-deoxy-D-xylulose-5-phosphate synthase (635 aa).

Residues His74 and 115 to 117 each bind thiamine diphosphate; that span reads GHA. A Mg(2+)-binding site is contributed by Asp146. Thiamine diphosphate contacts are provided by residues 147–148, Asn175, Tyr285, and Glu367; that span reads GA. Asn175 provides a ligand contact to Mg(2+).

It belongs to the transketolase family. DXPS subfamily. As to quaternary structure, homodimer. It depends on Mg(2+) as a cofactor. Thiamine diphosphate serves as cofactor.

The enzyme catalyses D-glyceraldehyde 3-phosphate + pyruvate + H(+) = 1-deoxy-D-xylulose 5-phosphate + CO2. The protein operates within metabolic intermediate biosynthesis; 1-deoxy-D-xylulose 5-phosphate biosynthesis; 1-deoxy-D-xylulose 5-phosphate from D-glyceraldehyde 3-phosphate and pyruvate: step 1/1. Functionally, catalyzes the acyloin condensation reaction between C atoms 2 and 3 of pyruvate and glyceraldehyde 3-phosphate to yield 1-deoxy-D-xylulose-5-phosphate (DXP). In Anaeromyxobacter sp. (strain Fw109-5), this protein is 1-deoxy-D-xylulose-5-phosphate synthase.